The following is a 406-amino-acid chain: tRNA-specific 2-thiouridylase MnmA (406 aa).

ATP is bound by residues 42–49 and Leu68; that span reads GLSGGVDS. Cys129 serves as the catalytic Nucleophile. Cys129 and Cys239 are oxidised to a cystine. Gly154 provides a ligand contact to ATP. The segment at 189–191 is interaction with tRNA; the sequence is KDQ. The Cysteine persulfide intermediate role is filled by Cys239. Residues 344–345 form an interaction with tRNA region; sequence RY.

The protein belongs to the MnmA/TRMU family.

The protein resides in the cytoplasm. The catalysed reaction is S-sulfanyl-L-cysteinyl-[protein] + uridine(34) in tRNA + AH2 + ATP = 2-thiouridine(34) in tRNA + L-cysteinyl-[protein] + A + AMP + diphosphate + H(+). In terms of biological role, catalyzes the 2-thiolation of uridine at the wobble position (U34) of tRNA, leading to the formation of s(2)U34. The chain is tRNA-specific 2-thiouridylase MnmA from Prochlorococcus marinus (strain SARG / CCMP1375 / SS120).